A 130-amino-acid polypeptide reads, in one-letter code: MATTSKKSGSKKSKRNVPNGVVHIQSTFNNTIVSITDTSGEVISWSSAGASGFKGARKGTPFAAQTAAELAARRALEQGMRQIEVLVRGPGSGRETAIRALQVAGLEITLIRDVTPLPHNGCRRPKRRRV.

This sequence belongs to the universal ribosomal protein uS11 family. Part of the 30S ribosomal subunit. Interacts with proteins S7 and S18. Binds to IF-3.

Located on the platform of the 30S subunit, it bridges several disparate RNA helices of the 16S rRNA. Forms part of the Shine-Dalgarno cleft in the 70S ribosome. The polypeptide is Small ribosomal subunit protein uS11 (Prochlorococcus marinus (strain NATL2A)).